The primary structure comprises 238 residues: Laccase-S (238 aa).

Plastocyanin-like domains follow at residues 4–87 (NVIA…YDPA) and 100–238 (HTII…IARY). The N-linked (GlcNAc...) asparagine glycan is linked to N8. The Cu cation site is built by H21, H23, H66, and H68. Residues C74 and C162 are joined by a disulfide bond. N165 carries N-linked (GlcNAc...) asparagine glycosylation.

This sequence belongs to the multicopper oxidase family. In terms of assembly, monomer. The cofactor is Cu cation.

Its subcellular location is the secreted. It catalyses the reaction 4 hydroquinone + O2 = 4 benzosemiquinone + 2 H2O. With respect to regulation, activity is strongly promoted by toluene. Activity is promoted by magnesium, potassium, cadmium, zinc, nickel, sodium, lead and manganese ions. Completely inhibited by IAA (cysteine protease inhibitor), PMSF (serine protease inhibitor), DEP (histidine protease inhibitor) and NAI (tyrosine protease inhibitor). Inhibited by ethanol, acetone, SDS, and EDTA. Activity is strongly inhibited by mercury ions. Also inhibited by lithium, aluminum, calcium, barium and iron ions. Lignin degradation and detoxification of lignin-derived products. Has activity towards 2,2'-azino-bis(3-ethylbenzothiazoline-6-sulfonic acid) (ABTS). The chain is Laccase-S from Trametes hirsuta (White-rot fungus).